We begin with the raw amino-acid sequence, 1378 residues long: MSLLMFTQLLLCGFLYVRVDGSRLRQEDFPPRIVEHPSDVIVSKGEPTTLNCKAEGRPTPTIEWYKDGERVETDKDDPRSHRMLLPSGSLFFLRIVHGRRSKPDEGSYVCVARNYLGEAVSRNASLEVALLRDDFRQNPTDVVVAAGEPAILECQPPRGHPEPTIYWKKDKVRIDDKEERISIRGGKLMISNTRKSDAGMYTCVGTNMVGERDSDPAELTVFERPTFLRRPINQVVLEEEAVEFRCQVQGDPQPTVRWKKDDADLPRGRYDIKDDYTLRIKKTMSTDEGTYMCIAENRVGKMEASATLTVRAPPQFVVRPRDQIVAQGRTVTFPCETKGNPQPAVFWQKEGSQNLLFPNQPQQPNSRCSVSPTGDLTITNIQRSDAGYYICQALTVAGSILAKAQLEVTDVLTDRPPPIILQGPANQTLAVDGTALLKCKATGDPLPVISWLKEGFTFPGRDPRATIQEQGTLQIKNLRISDTGTYTCVATSSSGETSWSAVLDVTESGATISKNYDLSDLPGPPSKPQVTDVTKNSVTLSWQPGTPGTLPASAYIIEAFSQSVSNSWQTVANHVKTTLYTVRGLRPNTIYLFMVRAINPQGLSDPSPMSDPVRTQDISPPAQGVDHRQVQKELGDVLVRLHNPVVLTPTTVQVTWTVDRQPQFIQGYRVMYRQTSGLQATSSWQNLDAKVPTERSAVLVNLKKGVTYEIKVRPYFNEFQGMDSESKTVRTTEEAPSAPPQSVTVLTVGSYNSTSISVSWDPPPPDHQNGIIQEYKIWCLGNETRFHINKTVDAAIRSVIIGGLFPGIQYRVEVAASTSAGVGVKSEPQPIIIGRRNEVVITENNNSITEQITDVVKQPAFIAGIGGACWVILMGFSIWLYWRRKKRKGLSNYAVTFQRGDGGLMSNGSRPGLLNAGDPSYPWLADSWPATSLPVNNSNSGPNEIGNFGRGDVLPPVPGQGDKTATMLSDGAIYSSIDFTTKTSYNSSSQITQATPYATTQILHSNSIHELAVDLPDPQWKSSIQQKTDLMGFGYSLPDQNKGNNGGKGGKKKKNKNSSKPQKNNGSTWANVPLPPPPVQPLPGTELEHYAVEQQENGYDSDSWCPPLPVQTYLHQGLEDELEEDDDRVPTPPVRGVASSPAISFGQQSTATLTPSPREEMQPMLQAHLDELTRAYQFDIAKQTWHIQSNNQPPQPPVPPLGYVSGALISDLETDVADDDADDEEEALEIPRPLRALDQTPGSSMDNLDSSVTGKAFTSSQRPRPTSPFSTDSNTSAALSQSQRPRPTKKHKGGRMDQQPALPHRREGMTDEEALVPYSKPSFPSPGGHSSSGTASSKGSTGPRKTEVLRAGHQRNASDLLDIGYMGSNSQGQFTGEL.

The first 21 residues, 1-21 (MSLLMFTQLLLCGFLYVRVDG), serve as a signal peptide directing secretion. The Extracellular portion of the chain corresponds to 22–859 (SRLRQEDFPP…EQITDVVKQP (838 aa)). 5 consecutive Ig-like C2-type domains span residues 31 to 127 (PRIV…ASLE), 133 to 220 (DDFR…AELT), 225 to 309 (PTFL…ATLT), 314 to 409 (PQFV…LEVT), and 418 to 504 (PIIL…AVLD). Cysteine 52 and cysteine 110 are disulfide-bonded. Asparagine 123 is a glycosylation site (N-linked (GlcNAc...) asparagine). Intrachain disulfides connect cysteine 154-cysteine 203, cysteine 246-cysteine 293, and cysteine 335-cysteine 391. Residue asparagine 426 is glycosylated (N-linked (GlcNAc...) asparagine). Residues cysteine 439 and cysteine 488 are joined by a disulfide bond. Fibronectin type-III domains follow at residues 524–618 (PPSK…TQDI), 637–735 (VLVR…TEEA), and 739–836 (PPQS…IGRR). Residues 603–625 (LSDPSPMSDPVRTQDISPPAQGV) are disordered. N-linked (GlcNAc...) asparagine glycans are attached at residues asparagine 752, asparagine 782, asparagine 789, and asparagine 845. The helical transmembrane segment at 860–880 (AFIAGIGGACWVILMGFSIWL) threads the bilayer. Residues 881-1378 (YWRRKKRKGL…NSQGQFTGEL (498 aa)) are Cytoplasmic-facing. 3 disordered regions span residues 1032–1084 (GFGY…PLPG), 1124–1156 (EDDDRVPTPPVRGVASSPAISFGQQSTATLTPS), and 1215–1348 (DVAD…KTEV). Low complexity predominate over residues 1058 to 1067 (SSKPQKNNGS). The segment covering 1141–1155 (PAISFGQQSTATLTP) has biased composition (polar residues). A Phosphothreonine modification is found at threonine 1154. Serine 1156 carries the post-translational modification Phosphoserine. Residues 1215–1228 (DVADDDADDEEEAL) are compositionally biased toward acidic residues. Positions 1240 to 1285 (TPGSSMDNLDSSVTGKAFTSSQRPRPTSPFSTDSNTSAALSQSQRP) are enriched in polar residues. The span at 1319–1343 (SKPSFPSPGGHSSSGTASSKGSTGP) shows a compositional bias: low complexity.

Belongs to the immunoglobulin superfamily. ROBO family. In terms of assembly, interacts with SLIT2.

The protein resides in the membrane. Its function is as follows. Receptor for SLIT2, and probably SLIT1, which are thought to act as molecular guidance cue in cellular migration, including axonal navigation at the ventral midline of the neural tube and projection of axons to different regions during neuronal development. This is Roundabout homolog 2 (ROBO2) from Homo sapiens (Human).